The following is a 432-amino-acid chain: Serine hydroxymethyltransferase (432 aa).

(6S)-5,6,7,8-tetrahydrofolate contacts are provided by residues L131 and 135–137 (GHL). The residue at position 240 (K240) is an N6-(pyridoxal phosphate)lysine.

The protein belongs to the SHMT family. As to quaternary structure, homodimer. Pyridoxal 5'-phosphate serves as cofactor.

The protein resides in the cytoplasm. It catalyses the reaction (6R)-5,10-methylene-5,6,7,8-tetrahydrofolate + glycine + H2O = (6S)-5,6,7,8-tetrahydrofolate + L-serine. The protein operates within one-carbon metabolism; tetrahydrofolate interconversion. It functions in the pathway amino-acid biosynthesis; glycine biosynthesis; glycine from L-serine: step 1/1. Catalyzes the reversible interconversion of serine and glycine with tetrahydrofolate (THF) serving as the one-carbon carrier. This reaction serves as the major source of one-carbon groups required for the biosynthesis of purines, thymidylate, methionine, and other important biomolecules. Also exhibits THF-independent aldolase activity toward beta-hydroxyamino acids, producing glycine and aldehydes, via a retro-aldol mechanism. This is Serine hydroxymethyltransferase from Bradyrhizobium diazoefficiens (strain JCM 10833 / BCRC 13528 / IAM 13628 / NBRC 14792 / USDA 110).